Here is a 169-residue protein sequence, read N- to C-terminus: ATP synthase subunit b (169 aa).

A helical membrane pass occupies residues 11-31 (IPSFIAQVVNFGLLLGLLYLF).

This sequence belongs to the ATPase B chain family. In terms of assembly, F-type ATPases have 2 components, F(1) - the catalytic core - and F(0) - the membrane proton channel. F(1) has five subunits: alpha(3), beta(3), gamma(1), delta(1), epsilon(1). F(0) has three main subunits: a(1), b(2) and c(10-14). The alpha and beta chains form an alternating ring which encloses part of the gamma chain. F(1) is attached to F(0) by a central stalk formed by the gamma and epsilon chains, while a peripheral stalk is formed by the delta and b chains.

It is found in the cell membrane. F(1)F(0) ATP synthase produces ATP from ADP in the presence of a proton or sodium gradient. F-type ATPases consist of two structural domains, F(1) containing the extramembraneous catalytic core and F(0) containing the membrane proton channel, linked together by a central stalk and a peripheral stalk. During catalysis, ATP synthesis in the catalytic domain of F(1) is coupled via a rotary mechanism of the central stalk subunits to proton translocation. In terms of biological role, component of the F(0) channel, it forms part of the peripheral stalk, linking F(1) to F(0). The chain is ATP synthase subunit b from Dehalococcoides mccartyi (strain ATCC BAA-2266 / KCTC 15142 / 195) (Dehalococcoides ethenogenes (strain 195)).